Here is a 481-residue protein sequence, read N- to C-terminus: Ribosomal protein uS12 methylthiotransferase RimO (481 aa).

Residues 38–148 (NRIGFVSLGC…VLKHVHKYVP (111 aa)) enclose the MTTase N-terminal domain. [4Fe-4S] cluster is bound by residues Cys47, Cys83, Cys112, Cys180, Cys184, and Cys187. The Radical SAM core domain occupies 166 to 403 (LTPKHYAYLK…MEVQAEISAE (238 aa)). The TRAM domain occupies 406-472 (ARFVGRTMDI…EHDLWAELVD (67 aa)).

It belongs to the methylthiotransferase family. RimO subfamily. It depends on [4Fe-4S] cluster as a cofactor.

The protein localises to the cytoplasm. It catalyses the reaction L-aspartate(89)-[ribosomal protein uS12]-hydrogen + (sulfur carrier)-SH + AH2 + 2 S-adenosyl-L-methionine = 3-methylsulfanyl-L-aspartate(89)-[ribosomal protein uS12]-hydrogen + (sulfur carrier)-H + 5'-deoxyadenosine + L-methionine + A + S-adenosyl-L-homocysteine + 2 H(+). In terms of biological role, catalyzes the methylthiolation of an aspartic acid residue of ribosomal protein uS12. The protein is Ribosomal protein uS12 methylthiotransferase RimO of Shewanella oneidensis (strain ATCC 700550 / JCM 31522 / CIP 106686 / LMG 19005 / NCIMB 14063 / MR-1).